Reading from the N-terminus, the 221-residue chain is DNA replication complex GINS protein SLD5 (221 aa).

The protein belongs to the GINS4/SLD5 family. In terms of assembly, component of the GINS complex which is a heterotetramer of gins1/psf1, gins2/psf2, gins3/psf3 and gins4/sld5. Component of the CMG helicase complex, composed of the mcm2-7 complex, the GINS complex and cdc45.

It localises to the nucleus. The protein resides in the chromosome. It is found in the cytoplasm. Its function is as follows. Required for initiation of chromosomal DNA replication. Core component of CDC45-MCM-GINS (CMG) helicase, the molecular machine that unwinds template DNA during replication, and around which the replisome is built. The chain is DNA replication complex GINS protein SLD5 from Xenopus laevis (African clawed frog).